The following is a 273-amino-acid chain: MSNQEAIGLIDSGVGGLTVLKEALKQLPNERLIYLGDTARCPYGPRPAEQVVQFTWEMADFLLKKRIKMLVIACNTATAVALEEIKAALPIPVVGVILPGARAAVKVTKNNKIGVIGTLGTIKSASYEIAIKSKAPTIEVTSLDCPKFVPIVESNQYRSSVAKKIVAETLQALQLKGLDTLILGCTHYPLLRPVIQNVMGSHVTLIDSGAETVGEVSMLLDYFDIAHTPEAPTQPHEFYTTGSAKMFEEIASSWLGIENLKAQQIHLGGNEND.

Residues 11–12 (DS) and 43–44 (YG) each bind substrate. Catalysis depends on cysteine 74, which acts as the Proton donor/acceptor. 75–76 (NT) lines the substrate pocket. The Proton donor/acceptor role is filled by cysteine 185. 186-187 (TH) lines the substrate pocket.

It belongs to the aspartate/glutamate racemases family. In terms of assembly, homodimer.

It catalyses the reaction L-glutamate = D-glutamate. Its pathway is cell wall biogenesis; peptidoglycan biosynthesis. Functionally, provides the (R)-glutamate required for cell wall biosynthesis. The protein is Glutamate racemase of Enterococcus faecalis (strain ATCC 700802 / V583).